The chain runs to 710 residues: Interferon-induced GTP-binding protein Mx2 (710 aa).

A disordered region spans residues 1-87 (MSLSFRPLKY…RSKGPENNLY (87 aa)). Polar residues-rich tracts occupy residues 39–50 (QTMSPPQWQVEE) and 58–79 (NNFS…QQRS). A Dynamin-type G domain is found at 112–383 (DLALPAIAVI…LIWHINKSLP (272 aa)). Positions 122-129 (GDQSSGKS) are G1 motif. 122 to 129 (GDQSSGKS) contributes to the GTP binding site. A G2 motif region spans residues 147–149 (ITR). The G3 motif stretch occupies residues 221–224 (DLPG). GTP-binding positions include 221–225 (DLPGI) and 290–293 (TKPD). The tract at residues 290-293 (TKPD) is G4 motif. A G5 motif region spans residues 322-325 (KCRG). In terms of domain architecture, GED spans 619 to 710 (IVEIGVHLNA…ALYEFPHFKG (92 aa)).

This sequence belongs to the TRAFAC class dynamin-like GTPase superfamily. Dynamin/Fzo/YdjA family.

The protein localises to the cytoplasm. The protein resides in the nucleus. Its function is as follows. Interferon-induced dynamin-like GTPase with antiviral activity against vesicular stomatitis virus (VSV). This chain is Interferon-induced GTP-binding protein Mx2 (MX2), found in Bubalus bubalis (Domestic water buffalo).